The primary structure comprises 215 residues: Nascent polypeptide-associated complex subunit alpha-2 (215 aa).

Residues 1–51 form a disordered region; sequence MPGEATETVPATEQELPQSQAETGSGTASDSGESVPGIEEQDSTQTTTQKA. Over residues 9 to 32 the composition is skewed to polar residues; the sequence is VPATEQELPQSQAETGSGTASDSG. A phosphoserine mark is found at Ser-43 and Ser-132. Residues 70-135 form the NAC-A/B domain; that stretch reads SRSEKRARKA…AKIQDLSQQA (66 aa). N6-acetyllysine; alternate is present on Lys-142. Residue Lys-142 forms a Glycyl lysine isopeptide (Lys-Gly) (interchain with G-Cter in SUMO2); alternate linkage. A Phosphothreonine modification is found at Thr-161. Residues Ser-166, Ser-186, Ser-191, and Ser-203 each carry the phosphoserine modification. In terms of domain architecture, UBA spans 176-213; sequence VEVKDVKLVMSQANVSRAKAVRALKNNSNDIVNAIMEL. Phosphothreonine is present on Thr-214.

This sequence belongs to the NAC-alpha family. Part of the nascent polypeptide-associated complex (NAC), consisting of NACA and BTF3. NAC associates with ribosomes through the BTF3 subunit. Both subunits can contact nascent polypeptide chains. Expressed specifically in testis and skeletal muscle.

Its subcellular location is the cytoplasm. The protein resides in the nucleus. Functionally, prevents inappropriate targeting of non-secretory polypeptides to the endoplasmic reticulum (ER). Binds to nascent polypeptide chains as they emerge from the ribosome and blocks their interaction with the signal recognition particle (SRP), which normally targets nascent secretory peptides to the ER. Also reduces the inherent affinity of ribosomes for protein translocation sites in the ER membrane (M sites). This is Nascent polypeptide-associated complex subunit alpha-2 (NACA2) from Homo sapiens (Human).